Reading from the N-terminus, the 36-residue chain is Potassium channel toxin alpha-KTx 16.5 (36 aa).

Cystine bridges form between cysteine 7–cysteine 28, cysteine 13–cysteine 33, and cysteine 17–cysteine 35. An interaction with Ca(2+)-activated K(+) channels region spans residues glycine 26–cysteine 33.

This sequence belongs to the short scorpion toxin superfamily. Potassium channel inhibitor family. Alpha-KTx 16 subfamily. In terms of tissue distribution, expressed by the venom gland.

It is found in the secreted. Functionally, augments responses to direct muscle stimulation probably by blocking calcium-activated potassium channels. This chain is Potassium channel toxin alpha-KTx 16.5, found in Leiurus hebraeus (Hebrew deathstalker scorpion).